Here is a 170-residue protein sequence, read N- to C-terminus: Peptide methionine sulfoxide reductase MsrA (170 aa).

Residue Cys-14 is part of the active site.

It belongs to the MsrA Met sulfoxide reductase family.

It carries out the reaction L-methionyl-[protein] + [thioredoxin]-disulfide + H2O = L-methionyl-(S)-S-oxide-[protein] + [thioredoxin]-dithiol. The catalysed reaction is [thioredoxin]-disulfide + L-methionine + H2O = L-methionine (S)-S-oxide + [thioredoxin]-dithiol. Its function is as follows. Has an important function as a repair enzyme for proteins that have been inactivated by oxidation. Catalyzes the reversible oxidation-reduction of methionine sulfoxide in proteins to methionine. The protein is Peptide methionine sulfoxide reductase MsrA of Streptomyces avermitilis (strain ATCC 31267 / DSM 46492 / JCM 5070 / NBRC 14893 / NCIMB 12804 / NRRL 8165 / MA-4680).